Here is a 571-residue protein sequence, read N- to C-terminus: Gag-Pro polyprotein (571 aa).

The N-myristoyl glycine; by host moiety is linked to residue Gly-2. Residues 100 to 103 (PPPY) carry the PPXY motif motif. Repeats lie at residues 342–362 (PPPG…DCPT) and 367–387 (PPPG…DCPT). CCHC-type zinc fingers lie at residues 345–362 (GPCY…DCPT) and 370–387 (GPCP…DCPT). The Peptidase A2 domain occupies 447 to 525 (ALMLVDTGAE…DKWQILGRDV (79 aa)). Asp-452 acts as the Protease; shared with dimeric partner in catalysis.

In terms of assembly, homodimer; the homodimers are part of the immature particles. Interacts with human TSG101 and NEDD4; these interactions are essential for budding and release of viral particles. Homodimer; further assembles as homohexamers. Post-translationally, specific enzymatic cleavages by the viral protease yield mature proteins. The polyprotein is cleaved during and after budding, this process is termed maturation. The protease is autoproteolytically processed at its N- and C-termini. Gag polyprotein: Myristoylated. Myristoylation of the matrix (MA) domain mediates the transport and binding of Gag polyproteins to the host plasma membrane and is required for the assembly of viral particles.

It is found in the virion. Functionally, the matrix domain targets Gag, Gag-Pro and Gag-Pro-Pol polyproteins to the plasma membrane via a multipartite membrane binding signal, that includes its myristoylated N-terminus. Its function is as follows. Matrix protein. In terms of biological role, forms the spherical core of the virus that encapsulates the genomic RNA-nucleocapsid complex. Binds strongly to viral nucleic acids and promote their aggregation. Also destabilizes the nucleic acids duplexes via highly structured zinc-binding motifs. Functionally, the aspartyl protease mediates proteolytic cleavages of Gag and Gag-Pol polyproteins during or shortly after the release of the virion from the plasma membrane. Cleavages take place as an ordered, step-wise cascade to yield mature proteins. This process is called maturation. Displays maximal activity during the budding process just prior to particle release from the cell. The sequence is that of Gag-Pro polyprotein from Bos taurus (Bovine).